The chain runs to 496 residues: Glutamate--tRNA ligase (496 aa).

The 'HIGH' region motif lies at 11-21; sequence PSPTGLLHIGN. Residues 255–259 carry the 'KMSKS' region motif; sequence KLSKR. Lys-258 lines the ATP pocket.

It belongs to the class-I aminoacyl-tRNA synthetase family. Glutamate--tRNA ligase type 1 subfamily. Monomer.

The protein resides in the cytoplasm. It carries out the reaction tRNA(Glu) + L-glutamate + ATP = L-glutamyl-tRNA(Glu) + AMP + diphosphate. Its function is as follows. Catalyzes the attachment of glutamate to tRNA(Glu) in a two-step reaction: glutamate is first activated by ATP to form Glu-AMP and then transferred to the acceptor end of tRNA(Glu). The polypeptide is Glutamate--tRNA ligase (Streptococcus pyogenes serotype M49 (strain NZ131)).